The primary structure comprises 95 residues: Co-chaperonin GroES (95 aa).

Belongs to the GroES chaperonin family. Heptamer of 7 subunits arranged in a ring. Interacts with the chaperonin GroEL.

The protein resides in the cytoplasm. In terms of biological role, together with the chaperonin GroEL, plays an essential role in assisting protein folding. The GroEL-GroES system forms a nano-cage that allows encapsulation of the non-native substrate proteins and provides a physical environment optimized to promote and accelerate protein folding. GroES binds to the apical surface of the GroEL ring, thereby capping the opening of the GroEL channel. This Nitratidesulfovibrio vulgaris (strain ATCC 29579 / DSM 644 / CCUG 34227 / NCIMB 8303 / VKM B-1760 / Hildenborough) (Desulfovibrio vulgaris) protein is Co-chaperonin GroES.